A 419-amino-acid chain; its full sequence is UDP-N-acetylglucosamine 1-carboxyvinyltransferase 1 (419 aa).

22 to 23 (KN) contributes to the phosphoenolpyruvate binding site. A UDP-N-acetyl-alpha-D-glucosamine-binding site is contributed by arginine 92. The active-site Proton donor is cysteine 116. A 2-(S-cysteinyl)pyruvic acid O-phosphothioketal modification is found at cysteine 116. UDP-N-acetyl-alpha-D-glucosamine-binding positions include 121–125 (RPIDL), aspartate 306, and isoleucine 328.

It belongs to the EPSP synthase family. MurA subfamily.

It localises to the cytoplasm. The enzyme catalyses phosphoenolpyruvate + UDP-N-acetyl-alpha-D-glucosamine = UDP-N-acetyl-3-O-(1-carboxyvinyl)-alpha-D-glucosamine + phosphate. It functions in the pathway cell wall biogenesis; peptidoglycan biosynthesis. In terms of biological role, cell wall formation. Adds enolpyruvyl to UDP-N-acetylglucosamine. This is UDP-N-acetylglucosamine 1-carboxyvinyltransferase 1 from Streptococcus agalactiae serotype Ia (strain ATCC 27591 / A909 / CDC SS700).